The primary structure comprises 361 residues: Phospho-N-acetylmuramoyl-pentapeptide-transferase (361 aa).

10 helical membrane passes run 27 to 47 (ILASLTALIVGLLCGPLMIRW), 70 to 90 (GTPTMGGVLILLAITVSCLLW), 97 to 117 (SLWLVLLVTLANGLVGWVDDY), 134 to 154 (YFWQSVIALVAVSYLYWNASL), 167 to 187 (TVTWDLGIFFPVLAYFVIVGS), 199 to 219 (GLAIMPIVMVAGALGVFAYAS), 236 to 256 (TGELTIFCSSIVGAGLGFLWY), 263 to 283 (VFMGDVGSLALGAALGIVAVV), 288 to 308 (LVLLIMGGLFVIETLSVILQV), and 338 to 358 (KVIVRFWIITVVFVLCGLATL).

It belongs to the glycosyltransferase 4 family. MraY subfamily. The cofactor is Mg(2+).

The protein resides in the cell inner membrane. The catalysed reaction is UDP-N-acetyl-alpha-D-muramoyl-L-alanyl-gamma-D-glutamyl-meso-2,6-diaminopimeloyl-D-alanyl-D-alanine + di-trans,octa-cis-undecaprenyl phosphate = di-trans,octa-cis-undecaprenyl diphospho-N-acetyl-alpha-D-muramoyl-L-alanyl-D-glutamyl-meso-2,6-diaminopimeloyl-D-alanyl-D-alanine + UMP. The protein operates within cell wall biogenesis; peptidoglycan biosynthesis. In terms of biological role, catalyzes the initial step of the lipid cycle reactions in the biosynthesis of the cell wall peptidoglycan: transfers peptidoglycan precursor phospho-MurNAc-pentapeptide from UDP-MurNAc-pentapeptide onto the lipid carrier undecaprenyl phosphate, yielding undecaprenyl-pyrophosphoryl-MurNAc-pentapeptide, known as lipid I. This Legionella pneumophila (strain Lens) protein is Phospho-N-acetylmuramoyl-pentapeptide-transferase.